A 600-amino-acid polypeptide reads, in one-letter code: Elongation factor 4 (600 aa).

Residues 3-185 (KYIRNFSIIA…CLIHDIPHPQ (183 aa)) form the tr-type G domain. Residues 15–20 (DHGKST) and 132–135 (NKID) each bind GTP.

The protein belongs to the TRAFAC class translation factor GTPase superfamily. Classic translation factor GTPase family. LepA subfamily.

The protein localises to the cell inner membrane. The catalysed reaction is GTP + H2O = GDP + phosphate + H(+). Required for accurate and efficient protein synthesis under certain stress conditions. May act as a fidelity factor of the translation reaction, by catalyzing a one-codon backward translocation of tRNAs on improperly translocated ribosomes. Back-translocation proceeds from a post-translocation (POST) complex to a pre-translocation (PRE) complex, thus giving elongation factor G a second chance to translocate the tRNAs correctly. Binds to ribosomes in a GTP-dependent manner. In Blochmanniella pennsylvanica (strain BPEN), this protein is Elongation factor 4.